Here is a 181-residue protein sequence, read N- to C-terminus: GATA zinc finger domain-containing protein 22 (181 aa).

The GATA-type zinc-finger motif lies at 118–145 (CQICLTNNTPYWRWSVIENNKIRVCNRC).

In Dictyostelium discoideum (Social amoeba), this protein is GATA zinc finger domain-containing protein 22 (gtaV).